The following is a 309-amino-acid chain: Probable copper-dependent oxygenase clz3 (309 aa).

N-linked (GlcNAc...) asparagine glycosylation is found at Asn-9 and Asn-249. The helical transmembrane segment at 257 to 277 (FAVPLAAIAFIALIISGGYVI) threads the bilayer.

It belongs to the clz3 oxygenase family.

The protein localises to the membrane. It functions in the pathway secondary metabolite biosynthesis. In terms of biological role, probable copper-dependent oxygenase; part of the gene cluster that mediates the biosynthesis of squalestatin S1 (SQS1, also known as zaragozic acid A), a heavily oxidized fungal polyketide that offers potent cholesterol lowering activity by targeting squalene synthase (SS). SQS1 is composed of a 2,8-dioxobicyclic[3.2.1]octane-3,4,5-tricarboxyclic acid core that is connected to two lipophilic polyketide arms. These initial steps feature the priming of an unusual benzoic acid starter unit onto the highly reducing polyketide synthase clz14, followed by oxaloacetate extension and product release to generate a tricarboxylic acid containing product. The phenylalanine ammonia lyase (PAL) clz10 and the acyl-CoA ligase clz12 are involved in transforming phenylalanine into benzoyl-CoA. The citrate synthase-like protein clz17 is involved in connecting the C-alpha-carbons of the hexaketide chain and oxaloacetate to afford the tricarboxylic acid unit. The potential hydrolytic enzymes, clz11 and clz13, are in close proximity to pks2 and may participate in product release. On the other side, the tetraketide arm is synthesized by a the squalestatin tetraketide synthase clz2 and enzymatically esterified to the core in the last biosynthetic step, by the acetyltransferase clz6. The biosynthesis of the tetraketide must involve 3 rounds of chain extension. After the first and second rounds methyl-transfer occurs, and in all rounds of extension the ketoreductase and dehydratase are active. The enoyl reductase and C-MeT of clz2 are not active in the final round of extension. The acetyltransferase clz6 appears to have a broad substrate selectivity for its acyl CoA substrate, allowing the in vitro synthesis of novel squalestatins. The biosynthesis of SQS1 requires several oxidative steps likely performed by oxidoreductases clz3, clz15 and clz16. Finally, in support of the identification of the cluster as being responsible for SQS1 production, the cluster contains a gene encoding a putative squalene synthase (SS) clz20, suggesting a likely mechanism for self-resistance. In Cochliobolus lunatus (Filamentous fungus), this protein is Probable copper-dependent oxygenase clz3.